Here is a 310-residue protein sequence, read N- to C-terminus: Acetaldehyde dehydrogenase 1 (310 aa).

12-15 (SGNI) is a binding site for NAD(+). Cys-132 (acyl-thioester intermediate) is an active-site residue. Residues 163-171 (SAGPGTRAN) and Asn-287 each bind NAD(+).

This sequence belongs to the acetaldehyde dehydrogenase family.

It carries out the reaction acetaldehyde + NAD(+) + CoA = acetyl-CoA + NADH + H(+). The sequence is that of Acetaldehyde dehydrogenase 1 from Pseudomonas putida (strain W619).